The primary structure comprises 324 residues: Beta-ketoacyl-[acyl-carrier-protein] synthase III (324 aa).

Active-site residues include Cys112 and His249. An ACP-binding region spans residues 250 to 254 (QANIR). Asn279 is a catalytic residue.

It belongs to the thiolase-like superfamily. FabH family. In terms of assembly, homodimer.

The protein resides in the cytoplasm. It catalyses the reaction malonyl-[ACP] + acetyl-CoA + H(+) = 3-oxobutanoyl-[ACP] + CO2 + CoA. Its pathway is lipid metabolism; fatty acid biosynthesis. In terms of biological role, catalyzes the condensation reaction of fatty acid synthesis by the addition to an acyl acceptor of two carbons from malonyl-ACP. Catalyzes the first condensation reaction which initiates fatty acid synthesis and may therefore play a role in governing the total rate of fatty acid production. Possesses both acetoacetyl-ACP synthase and acetyl transacylase activities. Its substrate specificity determines the biosynthesis of branched-chain and/or straight-chain of fatty acids. In Streptococcus sanguinis (strain SK36), this protein is Beta-ketoacyl-[acyl-carrier-protein] synthase III.